The primary structure comprises 284 residues: Bifunctional protein FolD (284 aa).

NADP(+) contacts are provided by residues 166–168 and I232; that span reads GAS.

It belongs to the tetrahydrofolate dehydrogenase/cyclohydrolase family. Homodimer.

The enzyme catalyses (6R)-5,10-methylene-5,6,7,8-tetrahydrofolate + NADP(+) = (6R)-5,10-methenyltetrahydrofolate + NADPH. It catalyses the reaction (6R)-5,10-methenyltetrahydrofolate + H2O = (6R)-10-formyltetrahydrofolate + H(+). Its pathway is one-carbon metabolism; tetrahydrofolate interconversion. Its function is as follows. Catalyzes the oxidation of 5,10-methylenetetrahydrofolate to 5,10-methenyltetrahydrofolate and then the hydrolysis of 5,10-methenyltetrahydrofolate to 10-formyltetrahydrofolate. The polypeptide is Bifunctional protein FolD (Pseudomonas fluorescens (strain ATCC BAA-477 / NRRL B-23932 / Pf-5)).